Consider the following 931-residue polypeptide: Myelin regulatory factor homolog 1 (931 aa).

At 1 to 658 (MSSSDLLKGE…SCGSRLSQGT (658 aa)) the chain is on the cytoplasmic side. Positions 29-143 (TDEDDGSMVS…QQHQQTRGGN (115 aa)) are disordered. Residues 37 to 52 (VSPTSSADSMHQNLGV) are compositionally biased toward polar residues. Low complexity predominate over residues 53–68 (QQQQQQMLQAQQRQNQ). A compositionally biased stretch (polar residues) spans 117 to 126 (DNGNQTMNNI). Residues 127–138 (QSQQLSQQQHQQ) show a composition bias toward low complexity. Positions 169-436 (GTAAVNQPTN…TNPGSFEPQD (268 aa)) form a DNA-binding region, NDT80. A Peptidase S74 domain is found at 483–582 (SDIRLKEAIT…RMTGDLDSKI (100 aa)). The chain crosses the membrane as a helical span at residues 659–679 (VVTLVSIMAACLLAMSALYVL). At 680–931 (DWHNRNYGYH…FYRMCTLSSS (252 aa)) the chain is on the lumenal side. N-linked (GlcNAc...) asparagine glycosylation is found at Asn-797 and Asn-912.

It belongs to the MRF family. Homotrimer. Interacts with myrf-2. Interacts (via C-terminus) with pan-1 (via LRR regions); the interaction promotes the role of myrf-1 in the synaptic remodeling of DD GABAergic motor neurons at the cell membrane. Myelin regulatory factor: Follows autocatalytic cleavage via the peptidase S74 domain. Autoprocessing is apparently constitutive and is essential for transcriptional activity. Widely expressed in many tissues, including neuronal, muscle and epidermal stem cells. In neurons, expressed in dorsal D (DD) GABAergic motor neurons.

The protein localises to the endoplasmic reticulum membrane. Its subcellular location is the nucleus. It is found in the apical cell membrane. It localises to the cytoplasm. In terms of biological role, constitutes a precursor of the transcription factor. Mediates the autocatalytic cleavage that releases the Myelin regulatory factor homolog 1, N-terminal component that specifically activates transcription of genes involved in synaptic rewiring during nervous system maturation. Membrane-bound part that has no transcription factor activity and remains attached to the endoplasmic reticulum membrane following cleavage. Functionally, transcription factor that specifically activates expression of genes involved in synaptic rewiring during nervous system maturation. Specifically required for dorsal D (DD) GABAergic motor neurons synaptic rewiring. Acts in complex with myrf-2 paralog. The chain is Myelin regulatory factor homolog 1 from Caenorhabditis elegans.